Here is a 42-residue protein sequence, read N- to C-terminus: Delta-actitoxin-Ael2d (42 aa).

Cystine bridges form between Cys-4–Cys-37, Cys-6–Cys-30, and Cys-20–Cys-38.

The protein belongs to the sea anemone type 3 (BDS) potassium channel toxin family.

The protein localises to the secreted. It localises to the nematocyst. Functionally, binds to voltage-gated sodium channels (Nav), and slows down the inactivation of mammalian Nav1.2/SCN2A, Nav1.3/SCN3A Nav1.4/SCN4A, Nav1.6/SCN8A, insect DmNav1 and BgNav1 channels, and arachnid VdNav1 channel. This toxin acts by binding to site 3 of sodium channels. This chain is Delta-actitoxin-Ael2d, found in Anthopleura elegantissima (Green aggregating anemone).